The primary structure comprises 127 residues: Holo-[acyl-carrier-protein] synthase (127 aa).

Mg(2+)-binding residues include Asp-8 and Glu-57.

The protein belongs to the P-Pant transferase superfamily. AcpS family. Mg(2+) is required as a cofactor.

It localises to the cytoplasm. It carries out the reaction apo-[ACP] + CoA = holo-[ACP] + adenosine 3',5'-bisphosphate + H(+). Functionally, transfers the 4'-phosphopantetheine moiety from coenzyme A to a Ser of acyl-carrier-protein. This chain is Holo-[acyl-carrier-protein] synthase, found in Hydrogenovibrio crunogenus (strain DSM 25203 / XCL-2) (Thiomicrospira crunogena).